An 826-amino-acid polypeptide reads, in one-letter code: Zinc phosphodiesterase ELAC protein 2 (826 aa).

The transit peptide at 1 to 16 (MWALCSLLRSAAGRTM) directs the protein to the mitochondrion. Disordered regions lie at residues 16-51 (MSQGRTISQAPARRERPRKDPLRHLRTREKRGPSGC) and 188-231 (EQRR…VSQR). Residues 27-38 (ARRERPRKDPLR) are compositionally biased toward basic and acidic residues. Phosphoserine occurs at positions 199, 208, 212, 229, 618, and 736. Residues 208–224 (SPERSSDSESNENEPHL) are compositionally biased toward basic and acidic residues. Positions 798–826 (ELAGGLEDGEPQQKRAHTEEPQAKKVRAQ) are disordered. The span at 808–820 (PQQKRAHTEEPQA) shows a compositional bias: basic and acidic residues.

It belongs to the RNase Z family. Homodimer. Interacts with PTCD1. Requires Zn(2+) as cofactor.

The protein resides in the mitochondrion. The protein localises to the mitochondrion matrix. It localises to the mitochondrion nucleoid. Its subcellular location is the nucleus. It carries out the reaction Endonucleolytic cleavage of RNA, removing extra 3' nucleotides from tRNA precursor, generating 3' termini of tRNAs. A 3'-hydroxy group is left at the tRNA terminus and a 5'-phosphoryl group is left at the trailer molecule.. Functionally, zinc phosphodiesterase, which displays mitochondrial tRNA 3'-processing endonuclease activity. Involved in tRNA maturation, by removing a 3'-trailer from precursor tRNA. Associates with mitochondrial DNA complexes at the nucleoids to initiate RNA processing and ribosome assembly. This Pan troglodytes (Chimpanzee) protein is Zinc phosphodiesterase ELAC protein 2 (ELAC2).